A 279-amino-acid polypeptide reads, in one-letter code: Ribosomal RNA large subunit methyltransferase E (279 aa).

The segment covering 1-10 (MSDDDQKPED) has biased composition (basic and acidic residues). The interval 1 to 66 (MSDDDQKPED…MKKGGDARAA (66 aa)) is disordered. S-adenosyl-L-methionine contacts are provided by glycine 136, tryptophan 138, aspartate 154, aspartate 170, and aspartate 194. Catalysis depends on lysine 234, which acts as the Proton acceptor.

It belongs to the class I-like SAM-binding methyltransferase superfamily. RNA methyltransferase RlmE family.

It is found in the cytoplasm. It carries out the reaction uridine(2552) in 23S rRNA + S-adenosyl-L-methionine = 2'-O-methyluridine(2552) in 23S rRNA + S-adenosyl-L-homocysteine + H(+). Specifically methylates the uridine in position 2552 of 23S rRNA at the 2'-O position of the ribose in the fully assembled 50S ribosomal subunit. The protein is Ribosomal RNA large subunit methyltransferase E of Maricaulis maris (strain MCS10) (Caulobacter maris).